Consider the following 339-residue polypeptide: Holliday junction branch migration complex subunit RuvB (339 aa).

Residues 1 to 180 (MTRTITPDMT…FGVISRLEFY (180 aa)) are large ATPase domain (RuvB-L). Residues leucine 19, arginine 20, glycine 61, lysine 64, threonine 65, threonine 66, 127–129 (EDF), arginine 170, tyrosine 180, and arginine 217 contribute to the ATP site. Threonine 65 provides a ligand contact to Mg(2+). Positions 181-251 (TIEELAFIIT…VVQDALALLE (71 aa)) are small ATPAse domain (RuvB-S). The segment at 254-339 (HMGFDYMDRM…EPPQGKLFQD (86 aa)) is head domain (RuvB-H). DNA contacts are provided by arginine 309 and arginine 314.

This sequence belongs to the RuvB family. As to quaternary structure, homohexamer. Forms an RuvA(8)-RuvB(12)-Holliday junction (HJ) complex. HJ DNA is sandwiched between 2 RuvA tetramers; dsDNA enters through RuvA and exits via RuvB. An RuvB hexamer assembles on each DNA strand where it exits the tetramer. Each RuvB hexamer is contacted by two RuvA subunits (via domain III) on 2 adjacent RuvB subunits; this complex drives branch migration. In the full resolvosome a probable DNA-RuvA(4)-RuvB(12)-RuvC(2) complex forms which resolves the HJ.

The protein resides in the cytoplasm. The catalysed reaction is ATP + H2O = ADP + phosphate + H(+). Its function is as follows. The RuvA-RuvB-RuvC complex processes Holliday junction (HJ) DNA during genetic recombination and DNA repair, while the RuvA-RuvB complex plays an important role in the rescue of blocked DNA replication forks via replication fork reversal (RFR). RuvA specifically binds to HJ cruciform DNA, conferring on it an open structure. The RuvB hexamer acts as an ATP-dependent pump, pulling dsDNA into and through the RuvAB complex. RuvB forms 2 homohexamers on either side of HJ DNA bound by 1 or 2 RuvA tetramers; 4 subunits per hexamer contact DNA at a time. Coordinated motions by a converter formed by DNA-disengaged RuvB subunits stimulates ATP hydrolysis and nucleotide exchange. Immobilization of the converter enables RuvB to convert the ATP-contained energy into a lever motion, pulling 2 nucleotides of DNA out of the RuvA tetramer per ATP hydrolyzed, thus driving DNA branch migration. The RuvB motors rotate together with the DNA substrate, which together with the progressing nucleotide cycle form the mechanistic basis for DNA recombination by continuous HJ branch migration. Branch migration allows RuvC to scan DNA until it finds its consensus sequence, where it cleaves and resolves cruciform DNA. The polypeptide is Holliday junction branch migration complex subunit RuvB (Geotalea daltonii (strain DSM 22248 / JCM 15807 / FRC-32) (Geobacter daltonii)).